The sequence spans 534 residues: MSNKFTMESPKHLVDDVLFISPTNDGSEEKPTEVTFQEDEGHDASLHNRSHDKKSELATEREIMATTTDDDGIPSPSHPMEKRVLRKMDIYLIPLMGMLYFLSNLDKSNIGNAEVAGLSKDIHLVGTQYNTCVTVFFATYVLFDPIGTNLLKIMGPPLMMSICLTCFGAISLGTAWVKNYAQLIVVRLLLGAFEGMIYPAINMYLSVCYRREQYALRFAFVFSAACLSSSFGGLIAYGCSKISGSLKDWQYIYIVEGCISLGFVPFYAFGLSKNLEDSWFFNKEEKEYISERYKTMNTFDPDEKFEWFQVWQAVKDVKTWASAVALFGIDLTTFGLTVFLPIIITSMGFTNVRAQLMTVPIYFLTAIVFFICAVWSDRIKLRSPFILGACLTTSIGIAIVLGSQVHGVRYFGVYILCMGIYVNAACNCLWLSGNTGNYFKRATALGINLFFGSGSGLVSGQIFVAKDKPRYIKGLSISLAFQVFSIFMTVVQIFLYKRENDKKKAIIDRCNELGEPIPYDERLSDKNPEFKYMY.

The Extracellular portion of the chain corresponds to 1-130 (MSNKFTMESP…DIHLVGTQYN (130 aa)). Residues 21-56 (SPTNDGSEEKPTEVTFQEDEGHDASLHNRSHDKKSE) are disordered. Residue S27 is modified to Phosphoserine. A helical membrane pass occupies residues 131 to 151 (TCVTVFFATYVLFDPIGTNLL). Position 152 (K152) is a topological domain, cytoplasmic. The helical transmembrane segment at 153–173 (IMGPPLMMSICLTCFGAISLG) threads the bilayer. Residues 174-187 (TAWVKNYAQLIVVR) lie on the Extracellular side of the membrane. The chain crosses the membrane as a helical span at residues 188-208 (LLLGAFEGMIYPAINMYLSVC). At 209–217 (YRREQYALR) the chain is on the cytoplasmic side. A helical membrane pass occupies residues 218-238 (FAFVFSAACLSSSFGGLIAYG). Topologically, residues 239 to 250 (CSKISGSLKDWQ) are extracellular. A helical membrane pass occupies residues 251–271 (YIYIVEGCISLGFVPFYAFGL). At 272–323 (SKNLEDSWFFNKEEKEYISERYKTMNTFDPDEKFEWFQVWQAVKDVKTWASA) the chain is on the cytoplasmic side. K283 participates in a covalent cross-link: Glycyl lysine isopeptide (Lys-Gly) (interchain with G-Cter in ubiquitin). Residues 324–344 (VALFGIDLTTFGLTVFLPIII) traverse the membrane as a helical segment. The Extracellular portion of the chain corresponds to 345–355 (TSMGFTNVRAQ). A helical membrane pass occupies residues 356–376 (LMTVPIYFLTAIVFFICAVWS). The Cytoplasmic portion of the chain corresponds to 377–384 (DRIKLRSP). The helical transmembrane segment at 385 to 405 (FILGACLTTSIGIAIVLGSQV) threads the bilayer. The Extracellular segment spans residues 406–410 (HGVRY). A helical transmembrane segment spans residues 411–431 (FGVYILCMGIYVNAACNCLWL). Topologically, residues 432–444 (SGNTGNYFKRATA) are cytoplasmic. Residues 445-465 (LGINLFFGSGSGLVSGQIFVA) form a helical membrane-spanning segment. The Extracellular segment spans residues 466 to 474 (KDKPRYIKG). Residues 475-495 (LSISLAFQVFSIFMTVVQIFL) traverse the membrane as a helical segment. Topologically, residues 496–534 (YKRENDKKKAIIDRCNELGEPIPYDERLSDKNPEFKYMY) are cytoplasmic.

It belongs to the major facilitator superfamily. Allantoate permease family.

It localises to the membrane. Its function is as follows. Involved in the uptake of nicotinic acid. The chain is High-affinity nicotinic acid transporter (TNA1) from Saccharomyces cerevisiae (strain ATCC 204508 / S288c) (Baker's yeast).